A 155-amino-acid chain; its full sequence is Endoribonuclease YbeY (155 aa).

The Zn(2+) site is built by His-114, His-118, and His-124.

The protein belongs to the endoribonuclease YbeY family. Requires Zn(2+) as cofactor.

It localises to the cytoplasm. In terms of biological role, single strand-specific metallo-endoribonuclease involved in late-stage 70S ribosome quality control and in maturation of the 3' terminus of the 16S rRNA. The polypeptide is Endoribonuclease YbeY (Escherichia coli O157:H7).